The sequence spans 302 residues: GTP cyclohydrolase FolE2 (302 aa).

This sequence belongs to the GTP cyclohydrolase IV family.

It carries out the reaction GTP + H2O = 7,8-dihydroneopterin 3'-triphosphate + formate + H(+). The protein operates within cofactor biosynthesis; 7,8-dihydroneopterin triphosphate biosynthesis; 7,8-dihydroneopterin triphosphate from GTP: step 1/1. Its function is as follows. Converts GTP to 7,8-dihydroneopterin triphosphate. The protein is GTP cyclohydrolase FolE2 of Pseudoalteromonas translucida (strain TAC 125).